Consider the following 341-residue polypeptide: Glyceraldehyde-3-phosphate dehydrogenase 1 (341 aa).

Residues 13–14 (RI), aspartate 35, and lysine 85 each bind NAD(+). D-glyceraldehyde 3-phosphate is bound by residues 157 to 159 (SCT), threonine 188, 217 to 218 (TG), and arginine 240. Residue cysteine 158 is the Nucleophile of the active site. NAD(+) is bound at residue asparagine 322.

The protein belongs to the glyceraldehyde-3-phosphate dehydrogenase family. In terms of assembly, homotetramer.

The protein localises to the cytoplasm. It catalyses the reaction D-glyceraldehyde 3-phosphate + phosphate + NAD(+) = (2R)-3-phospho-glyceroyl phosphate + NADH + H(+). The protein operates within carbohydrate degradation; glycolysis; pyruvate from D-glyceraldehyde 3-phosphate: step 1/5. The polypeptide is Glyceraldehyde-3-phosphate dehydrogenase 1 (gpd-1) (Caenorhabditis elegans).